The following is a 267-amino-acid chain: Octanoyltransferase (267 aa).

The interval M1 to P30 is disordered. The segment covering M16–Q28 has biased composition (polar residues). Residues G77 to Q265 form the BPL/LPL catalytic domain. Substrate contacts are provided by residues R116–H123, A196–G198, and G209–A211. The active-site Acyl-thioester intermediate is C227.

This sequence belongs to the LipB family.

It is found in the cytoplasm. It carries out the reaction octanoyl-[ACP] + L-lysyl-[protein] = N(6)-octanoyl-L-lysyl-[protein] + holo-[ACP] + H(+). The protein operates within protein modification; protein lipoylation via endogenous pathway; protein N(6)-(lipoyl)lysine from octanoyl-[acyl-carrier-protein]: step 1/2. Catalyzes the transfer of endogenously produced octanoic acid from octanoyl-acyl-carrier-protein onto the lipoyl domains of lipoate-dependent enzymes. Lipoyl-ACP can also act as a substrate although octanoyl-ACP is likely to be the physiological substrate. This Brucella abortus biovar 1 (strain 9-941) protein is Octanoyltransferase.